Reading from the N-terminus, the 94-residue chain is Small ribosomal subunit protein bS18c (94 aa).

This sequence belongs to the bacterial ribosomal protein bS18 family. In terms of assembly, part of the 30S ribosomal subunit.

It localises to the plastid. Its subcellular location is the chloroplast. The sequence is that of Small ribosomal subunit protein bS18c from Manihot esculenta (Cassava).